A 706-amino-acid polypeptide reads, in one-letter code: MESPTKEIEEFESNSLKHLQPEQIEKIWLRLRGLRKYKKTSQRLRSLVKQLERGEASVVDLKKNLEYAATVLESVYIDETRRLLDTEDELSDIQSDAVPSEVRDWLASTFTRQMGMMLRRSDEKPRFKSIVHAVQAGIFVERMYRRTSNMVGLSYPPAVIDALKDVDTWSFDVFSLNEASGDHALKFIFYELLTRYDLISRFKIPISALVSFVEALEVGYSKHKNPYHNLMHAADVTQTVHYLLYKTGVANWLTELEIFAIIFSAAIHDYEHTGTTNNFHIQTRSDPAILYNDRSVLENHHLSAAYRLLQEDEEMNILVNLSKDDWREFRTLVIEMVMATDMSCHFQQIKAMKTALQQPEAIEKPKALSLMLHTADISHPAKAWDLHHRWTMSLLEEFFRQGDREAELGLPFSPLCDRKSTMVAQSQVGFIDFIVEPTFTVLTDMTEKIVSPLIDESSQTGGTGQRRSSLNSINSSDAKRSGVKSSGSDGSAPINNSVIPVDYKSFKATWTEVVQINRERWRAKVPKEEKAKKEAEEKARLAAEEKQKEMEAKSQAEQGTTSKGEKKTSGEAKSQVNGTRKGDNPRGKNSKGEKAGEKQQNGDLKDGKNKADKKDHSNTGNESKKTDGTKKRSHGSPAPSTSSTSRITLPVIKPPLRHFKRPAYASSSYAPSVPKKTDDHPVRYKMLDQRIKMKKIQNISHHWNKK.

Met-1 bears the N-acetylmethionine mark. The tract at residues 123-146 (EKPRFKSIVHAVQAGIFVERMYRR) is calmodulin-binding. One can recognise a PDEase domain in the interval 151 to 528 (VGLSYPPAVI…ERWRAKVPKE (378 aa)). His-228 acts as the Proton donor in catalysis. Zn(2+)-binding residues include His-232, His-268, Asp-269, and Asp-376. Residue Asp-269 participates in Mg(2+) binding. Disordered stretches follow at residues 453-497 (LIDE…INNS) and 524-655 (KVPK…IKPP). Polar residues-rich tracts occupy residues 456-476 (ESSQ…INSS) and 483-497 (VKSS…INNS). Composition is skewed to basic and acidic residues over residues 524 to 554 (KVPK…EAKS), 580 to 597 (RKGD…KAGE), and 603 to 630 (DLKD…DGTK). Positions 638–647 (APSTSSTSRI) are enriched in polar residues.

It belongs to the cyclic nucleotide phosphodiesterase family. PDE1 subfamily. Homodimer. Zn(2+) is required as a cofactor. Mg(2+) serves as cofactor. In terms of tissue distribution, highly expressed in testis and at moderate levels in heart. As to expression, expressed at a moderate level in brain, the cerebellum, testis, heart and olfactory epithelium. Highly expressed in olfactory epithelium and at very low levels, if any, in other tissues. In the cochlea, expressed in the inner and outer hair cells (at protein level). In the brain, highly expressed in the neurons of the granule layer of the cerebellum, some Purkinje cells, the central amygdaloid nucleus, and the interpolar spinal trigem nucleus and, at moderate levels, in the glomerular and external plexiform layer of the olfactory bulb as well as in parts of the caudate-putamen and olfactory tubercle.

Its subcellular location is the lysosome. It carries out the reaction a nucleoside 3',5'-cyclic phosphate + H2O = a nucleoside 5'-phosphate + H(+). It catalyses the reaction 3',5'-cyclic GMP + H2O = GMP + H(+). The catalysed reaction is 3',5'-cyclic AMP + H2O = AMP + H(+). Its activity is regulated as follows. Type I PDE are activated by the binding of calmodulin in the presence of Ca(2+). Different splice variants may have different sensitivities to Ca(2+). With respect to regulation, exhibits a higher sensitivity to Ca(2+) stimulation than isoforms 1 and 2. Functionally, calmodulin-dependent cyclic nucleotide phosphodiesterase with a dual specificity for cAMP and cGMP, which are key regulators of many important physiological processes. Exhibits high affinity for both cAMP and cGMP. Modulates the amplitude and duration of the cAMP signal in sensory cilia in response to odorant stimulation, hence contributing to the generation of action potentials. Regulates smooth muscle cell proliferation. Regulates the stability of growth factor receptors, including PDGFRB. This chain is Dual specificity calcium/calmodulin-dependent 3',5'-cyclic nucleotide phosphodiesterase 1C, found in Mus musculus (Mouse).